Reading from the N-terminus, the 179-residue chain is MMRRPHGQAAMPMSGPRYNEFIQSPRVRVIDENGENLGVMYTRQAMEQAQEVGLDLVEVSPNADPPVAKFLDVGKYKYEAQKKANLARKTQKTQEIKEIKLRPNIDQHDYDTKMKKIVQFLEDGDKVKVTLRFRGREMAHGQLGMQVMQRVQADTQEIAKVEQHPRMEGRQMLMVVAPK.

The protein belongs to the IF-3 family. In terms of assembly, monomer.

It localises to the cytoplasm. In terms of biological role, IF-3 binds to the 30S ribosomal subunit and shifts the equilibrium between 70S ribosomes and their 50S and 30S subunits in favor of the free subunits, thus enhancing the availability of 30S subunits on which protein synthesis initiation begins. The polypeptide is Translation initiation factor IF-3 (Zymomonas mobilis subsp. mobilis (strain ATCC 31821 / ZM4 / CP4)).